The following is a 270-amino-acid chain: 3-methyl-2-oxobutanoate hydroxymethyltransferase (270 aa).

Asp-41 and Asp-80 together coordinate Mg(2+). Residues 41–42 (DS), Asp-80, and Lys-109 contribute to the 3-methyl-2-oxobutanoate site. Glu-111 serves as a coordination point for Mg(2+). The active-site Proton acceptor is the Glu-178.

The protein belongs to the PanB family. Homodecamer; pentamer of dimers. The cofactor is Mg(2+).

It is found in the cytoplasm. It carries out the reaction 3-methyl-2-oxobutanoate + (6R)-5,10-methylene-5,6,7,8-tetrahydrofolate + H2O = 2-dehydropantoate + (6S)-5,6,7,8-tetrahydrofolate. The protein operates within cofactor biosynthesis; (R)-pantothenate biosynthesis; (R)-pantoate from 3-methyl-2-oxobutanoate: step 1/2. Functionally, catalyzes the reversible reaction in which hydroxymethyl group from 5,10-methylenetetrahydrofolate is transferred onto alpha-ketoisovalerate to form ketopantoate. The sequence is that of 3-methyl-2-oxobutanoate hydroxymethyltransferase from Thermotoga neapolitana (strain ATCC 49049 / DSM 4359 / NBRC 107923 / NS-E).